Reading from the N-terminus, the 85-residue chain is Large ribosomal subunit protein bL27 (85 aa).

A disordered region spans residues methionine 1 to glycine 22. Over residues alanine 7 to glutamine 19 the composition is skewed to polar residues.

The protein belongs to the bacterial ribosomal protein bL27 family.

This chain is Large ribosomal subunit protein bL27, found in Leifsonia xyli subsp. xyli (strain CTCB07).